Consider the following 681-residue polypeptide: MTDTVVNRWMYPGDGPLQSNDKEQLQAGWSVHPGAQTDRQRKQEELTDEEKEIINRVIARAEKMEAMEQERIGRLVDRLETMRKNVAGDGVNRCILCGEQLGMLGSACVVCEDCKKNVCTKCGVETSNNRPHPVWLCKICLEQREVWKRSGAWFFKGFPKQVLPQPMPIKKTKPQQPAGEPATQEQPTPESRHPARAPARGDMEDRRPPGQKPGPDLTSAPGRGSHGPPTRRASEARMSTAARDSEGWDHAHGGGTGDTSRSPAGLRRANSVQAARPAPAPVPSPAPPQPVQPGPPGGSRATPGPGRFPEQSTEAPPSDPGYPGAVAPAREERTGPAGGFQAAPHTAAPYSQAAPARQPPPAEEEEEEANSYDSDEATTLGALEFSLLYDQDNSNLQCTIIRAKGLKPMDSNGLADPYVKLHLLPGASKSNKLRTKTLRNTRNPVWNETLQYHGITEEDMQRKTLRISVCDEDKFGHNEFIGETRFSLKKLKANQRKNFNICLERVIPMKRAGTTGSARGMALYEEEQVERIGDIEERGKILVSLMYSTQQGGLIVGIIRCVHLAAMDANGYSDPFVKLWLKPDMGKKAKHKTQIKKKTLNPEFNEEFFYDIKHSDLAKKSLDISVWDYDIGKSNDYIGGCQLGISAKGERLKHWYECLKNKDKKIERWHQLQNENHVSSD.

Residues 1 to 21 (MTDTVVNRWMYPGDGPLQSND) are disordered. The RabBD domain maps to 40-157 (QRKQEELTDE…KRSGAWFFKG (118 aa)). The FYVE-type zinc finger occupies 88–145 (GDGVNRCILCGEQLGMLGSACVVCEDCKKNVCTKCGVETSNNRPHPVWLCKICLEQRE). Zn(2+) contacts are provided by Cys94, Cys97, Cys111, Cys114, Cys119, Cys122, Cys137, and Cys140. The interval 162-375 (VLPQPMPIKK…EEEANSYDSD (214 aa)) is disordered. The span at 199-208 (ARGDMEDRRP) shows a compositional bias: basic and acidic residues. Arg223 is subject to Omega-N-methylarginine. A compositionally biased stretch (basic and acidic residues) spans 243–252 (RDSEGWDHAH). Residue Ser271 is modified to Phosphoserine. A compositionally biased stretch (pro residues) spans 278–296 (APAPVPSPAPPQPVQPGPP). Low complexity predominate over residues 347–356 (AAPYSQAAPA). Residues 362–375 (AEEEEEEANSYDSD) are compositionally biased toward acidic residues. A C2 1 domain is found at 379–501 (TLGALEFSLL…KANQRKNFNI (123 aa)). The Ca(2+) site is built by Met409, Asp410, Asp416, Asp471, Glu472, Asp473, Glu479, Glu526, Asp568, Asp574, Asp628, Tyr629, Asp630, and Asp636. The 134-residue stretch at 537–670 (ERGKILVSLM…NKDKKIERWH (134 aa)) folds into the C2 2 domain. Phosphoserine occurs at positions 679 and 680.

In terms of assembly, interacts with RAB3B, RAB3C, RAB3D, RAB8A, RAB27A and RAB27B. Interacts with RAB3A; this interaction recruits RPH3A to synaptic vesicules. Interacts (via C2B domain) with SNAP25. Interacts with deubiquitinating enzyme CAND1; this interaction results in the deubiquitination of RPH3A. Interacts with GRIN2A and DLG4; this ternary complex regulates NMDA receptor composition at postsynaptic membranes. Interacts with SNCA. Ca(2+) serves as cofactor. Post-translationally, ubiquitinated. Deubiquitinated by CAND1 to prevent its degradation. As to expression, specifically expressed in brain.

It localises to the cytoplasmic vesicle. The protein localises to the secretory vesicle. It is found in the synaptic vesicle membrane. The protein resides in the cell projection. Its subcellular location is the dendritic spine. It localises to the postsynaptic cell membrane. The protein localises to the membrane. In terms of biological role, plays an essential role in docking and fusion steps of regulated exocytosis. At the presynaptic level, RPH3A is recruited by RAB3A to the synaptic vesicle membrane in a GTP-dependent manner where it modulates synaptic vesicle trafficking and calcium-triggered neurotransmitter release. In the post-synaptic compartment, forms a ternary complex with GRIN2A and DLG4 and regulates NMDA receptor stability. Also plays a role in the exocytosis of arginine vasopressin hormone. The polypeptide is Rabphilin-3A (Rph3a) (Mus musculus (Mouse)).